The following is a 60-amino-acid chain: DNA gyrase inhibitor YacG (60 aa).

Cys-15, Cys-18, Cys-30, and Cys-34 together coordinate Zn(2+).

The protein belongs to the DNA gyrase inhibitor YacG family. In terms of assembly, interacts with GyrB. The cofactor is Zn(2+).

In terms of biological role, inhibits all the catalytic activities of DNA gyrase by preventing its interaction with DNA. Acts by binding directly to the C-terminal domain of GyrB, which probably disrupts DNA binding by the gyrase. This chain is DNA gyrase inhibitor YacG, found in Bradyrhizobium diazoefficiens (strain JCM 10833 / BCRC 13528 / IAM 13628 / NBRC 14792 / USDA 110).